A 72-amino-acid polypeptide reads, in one-letter code: Translation initiation factor IF-1 (72 aa).

One can recognise an S1-like domain in the interval 1-72; sequence MAKDDVIEVE…TRGRITYRYK (72 aa). Phosphotyrosine is present on Tyr-60.

It belongs to the IF-1 family. In terms of assembly, component of the 30S ribosomal translation pre-initiation complex which assembles on the 30S ribosome in the order IF-2 and IF-3, IF-1 and N-formylmethionyl-tRNA(fMet); mRNA recruitment can occur at any time during PIC assembly.

Its subcellular location is the cytoplasm. In terms of biological role, one of the essential components for the initiation of protein synthesis. Stabilizes the binding of IF-2 and IF-3 on the 30S subunit to which N-formylmethionyl-tRNA(fMet) subsequently binds. Helps modulate mRNA selection, yielding the 30S pre-initiation complex (PIC). Upon addition of the 50S ribosomal subunit IF-1, IF-2 and IF-3 are released leaving the mature 70S translation initiation complex. This Oceanobacillus iheyensis (strain DSM 14371 / CIP 107618 / JCM 11309 / KCTC 3954 / HTE831) protein is Translation initiation factor IF-1.